Consider the following 269-residue polypeptide: Formamidopyrimidine-DNA glycosylase (269 aa).

P2 functions as the Schiff-base intermediate with DNA in the catalytic mechanism. E3 serves as the catalytic Proton donor. The active-site Proton donor; for beta-elimination activity is the K57. The DNA site is built by H90, R109, and K150. The segment at 235 to 269 adopts an FPG-type zinc-finger fold; that stretch reads FVYGRAGEPCRICGEQIESIKLGQRSTFFCRHCQY. R259 acts as the Proton donor; for delta-elimination activity in catalysis.

The protein belongs to the FPG family. Monomer. Zn(2+) is required as a cofactor.

It catalyses the reaction Hydrolysis of DNA containing ring-opened 7-methylguanine residues, releasing 2,6-diamino-4-hydroxy-5-(N-methyl)formamidopyrimidine.. The enzyme catalyses 2'-deoxyribonucleotide-(2'-deoxyribose 5'-phosphate)-2'-deoxyribonucleotide-DNA = a 3'-end 2'-deoxyribonucleotide-(2,3-dehydro-2,3-deoxyribose 5'-phosphate)-DNA + a 5'-end 5'-phospho-2'-deoxyribonucleoside-DNA + H(+). Involved in base excision repair of DNA damaged by oxidation or by mutagenic agents. Acts as a DNA glycosylase that recognizes and removes damaged bases. Has a preference for oxidized purines, such as 7,8-dihydro-8-oxoguanine (8-oxoG). Has AP (apurinic/apyrimidinic) lyase activity and introduces nicks in the DNA strand. Cleaves the DNA backbone by beta-delta elimination to generate a single-strand break at the site of the removed base with both 3'- and 5'-phosphates. The polypeptide is Formamidopyrimidine-DNA glycosylase (Photorhabdus laumondii subsp. laumondii (strain DSM 15139 / CIP 105565 / TT01) (Photorhabdus luminescens subsp. laumondii)).